Here is a 286-residue protein sequence, read N- to C-terminus: Mycolic acid methyltransferase MmaA1 (286 aa).

Residues 32–33 (YT), 71–73 (GCG), 93–98 (TLSRNH), and 122–123 (WE) each bind S-adenosyl-L-methionine. Cysteine 268 is an active-site residue.

It belongs to the CFA/CMAS family.

It participates in lipid metabolism; mycolic acid biosynthesis. Its function is as follows. Involved in the conversion of a cis-olefin into a trans-olefin with concomitant introduction of an allylic methyl branch at the proximal position of the precursor to both the methoxy and ketomycolic acids. It directly affects the cis- to trans ratio and indirectly affects the keto to methoxy ratio. This Mycobacterium bovis (strain ATCC BAA-935 / AF2122/97) protein is Mycolic acid methyltransferase MmaA1 (cmaD).